Reading from the N-terminus, the 261-residue chain is Kallikrein-1 (261 aa).

Residues methionine 1–alanine 18 form the signal peptide. Residues proline 19–arginine 24 constitute a propeptide, activation peptide. Residues valine 25–lysine 258 form the Peptidase S1 domain. 5 disulfides stabilise this stretch: cysteine 31/cysteine 173, cysteine 50/cysteine 66, cysteine 152/cysteine 219, cysteine 184/cysteine 198, and cysteine 209/cysteine 234. The Charge relay system role is filled by histidine 65. An N-linked (GlcNAc...) asparagine glycan is attached at asparagine 108. Aspartate 120 serves as the catalytic Charge relay system. The active-site Charge relay system is serine 213.

The protein belongs to the peptidase S1 family. Kallikrein subfamily. As to expression, high levels in pancreas, submaxillary and parotid glands, spleen, and kidney.

It carries out the reaction Preferential cleavage of Arg-|-Xaa bonds in small molecule substrates. Highly selective action to release kallidin (lysyl-bradykinin) from kininogen involves hydrolysis of Met-|-Xaa or Leu-|-Xaa.. This is Kallikrein-1 (Ngfg) from Rattus norvegicus (Rat).